The chain runs to 62 residues: Photosystem II reaction center protein Z (62 aa).

The next 2 helical transmembrane spans lie at A8–A28 and F41–V61.

This sequence belongs to the PsbZ family. PSII is composed of 1 copy each of membrane proteins PsbA, PsbB, PsbC, PsbD, PsbE, PsbF, PsbH, PsbI, PsbJ, PsbK, PsbL, PsbM, PsbT, PsbY, PsbZ, Psb30/Ycf12, at least 3 peripheral proteins of the oxygen-evolving complex and a large number of cofactors. It forms dimeric complexes.

It localises to the plastid. Its subcellular location is the chloroplast thylakoid membrane. Functionally, controls the interaction of photosystem II (PSII) cores with the light-harvesting antenna, aiding in the dissipation of excitation energy within PSII. PSII is a light-driven water plastoquinone oxidoreductase, using light energy to abstract electrons from H(2)O, generating a proton gradient subsequently used for ATP formation. This is Photosystem II reaction center protein Z from Chlamydomonas reinhardtii (Chlamydomonas smithii).